Reading from the N-terminus, the 469-residue chain is NADH-quinone oxidoreductase subunit N (469 aa).

The next 14 membrane-spanning stretches (helical) occupy residues 6 to 26 (IWIIMPLAILAGASLLILLLG), 37 to 57 (VGVAACVGAALWALQLQPAAL), 61 to 81 (LGVAFTPFARFFTVLFSLTAA), 96 to 116 (ISGEEYPATVIFAAFGMAVVS), 121 to 141 (LLILFLGLEALTFAFYILVAI), 156 to 176 (LLLGAISAACIAFGIALLYAA), 197 to 217 (PIALAGWGLLLIGIAFKISLV), 234 to 254 (VVAFLSTASKGAAIAFLLLLL), 263 to 283 (LHTPLWWLSLLSMLVGNLAAL), 291 to 311 (MLAYSSIAQMGYLVLALLTGS), 315 to 335 (FAAVILYVVVYTAMNLAAFGA), 362 to 382 (AGILALALFALAGIPPTAGFI), 397 to 419 (IPLAIVGILAAAVSAYYYLRVVV), and 441 to 461 (IALSAAALVILAVGIYPSPLL).

The protein belongs to the complex I subunit 2 family. NDH-1 is composed of 14 different subunits. Subunits NuoA, H, J, K, L, M, N constitute the membrane sector of the complex.

It is found in the cell inner membrane. It catalyses the reaction a quinone + NADH + 5 H(+)(in) = a quinol + NAD(+) + 4 H(+)(out). In terms of biological role, NDH-1 shuttles electrons from NADH, via FMN and iron-sulfur (Fe-S) centers, to quinones in the respiratory chain. The immediate electron acceptor for the enzyme in this species is believed to be ubiquinone. Couples the redox reaction to proton translocation (for every two electrons transferred, four hydrogen ions are translocated across the cytoplasmic membrane), and thus conserves the redox energy in a proton gradient. This chain is NADH-quinone oxidoreductase subunit N, found in Geotalea uraniireducens (strain Rf4) (Geobacter uraniireducens).